Consider the following 390-residue polypeptide: Succinyl-diaminopimelate desuccinylase 1 (390 aa).

Residue His-76 participates in Zn(2+) binding. Asp-78 is a catalytic residue. Position 109 (Asp-109) interacts with Zn(2+). Catalysis depends on Glu-143, which acts as the Proton acceptor. Glu-144, Glu-172, and His-363 together coordinate Zn(2+).

The protein belongs to the peptidase M20A family. DapE subfamily. Homodimer. Zn(2+) is required as a cofactor. It depends on Co(2+) as a cofactor.

The enzyme catalyses N-succinyl-(2S,6S)-2,6-diaminopimelate + H2O = (2S,6S)-2,6-diaminopimelate + succinate. It participates in amino-acid biosynthesis; L-lysine biosynthesis via DAP pathway; LL-2,6-diaminopimelate from (S)-tetrahydrodipicolinate (succinylase route): step 3/3. In terms of biological role, catalyzes the hydrolysis of N-succinyl-L,L-diaminopimelic acid (SDAP), forming succinate and LL-2,6-diaminopimelate (DAP), an intermediate involved in the bacterial biosynthesis of lysine and meso-diaminopimelic acid, an essential component of bacterial cell walls. The sequence is that of Succinyl-diaminopimelate desuccinylase 1 from Alteromonas mediterranea (strain DSM 17117 / CIP 110805 / LMG 28347 / Deep ecotype).